The primary structure comprises 275 residues: Probable histone chaperone asf-1 (275 aa).

Acidic residues-rich tracts occupy residues 157–166 (EDPVAEPVED), 183–207 (DGQE…EVDL), and 230–247 (KMED…DDEP). Residues 157–275 (EDPVAEPVED…SDKTNNEMVQ (119 aa)) form a disordered region. The segment covering 265–275 (LSDKTNNEMVQ) has biased composition (basic and acidic residues).

This sequence belongs to the ASF1 family. As to quaternary structure, interacts with histone H3 and histone H4.

It is found in the nucleus. Histone chaperone that facilitates histone deposition and histone exchange and removal during nucleosome assembly and disassembly. This chain is Probable histone chaperone asf-1, found in Caenorhabditis elegans.